We begin with the raw amino-acid sequence, 556 residues long: Arginine--tRNA ligase (556 aa).

Residues 132–142 (ANPTGDLHLGH) carry the 'HIGH' region motif.

Belongs to the class-I aminoacyl-tRNA synthetase family. As to quaternary structure, monomer.

The protein localises to the cytoplasm. The enzyme catalyses tRNA(Arg) + L-arginine + ATP = L-arginyl-tRNA(Arg) + AMP + diphosphate. The polypeptide is Arginine--tRNA ligase (Listeria welshimeri serovar 6b (strain ATCC 35897 / DSM 20650 / CCUG 15529 / CIP 8149 / NCTC 11857 / SLCC 5334 / V8)).